The sequence spans 237 residues: Glutathione-independent glyoxalase HSP31 (237 aa).

Active-site residues include Cys-138, His-139, and Glu-170. Cysteine sulfinic acid (-SO2H) is present on Cys-138.

This sequence belongs to the peptidase C56 family. HSP31-like subfamily. As to quaternary structure, homodimer. In terms of processing, cys-138 is easily oxidized to sulfinic acid.

It localises to the cytoplasm. It is found in the P-body. It carries out the reaction methylglyoxal + H2O = (R)-lactate + H(+). Catalyzes the conversion of methylglyoxal (MG) to D-lactate in a single glutathione (GSH)-independent step. May play a role in detoxifying endogenously produced glyoxals. Involved in protection against reactive oxygen species (ROS). Important for viability in stationary phase. May negatively regulate TORC1 in response to nutrient limitation. The polypeptide is Glutathione-independent glyoxalase HSP31 (Saccharomyces cerevisiae (strain ATCC 204508 / S288c) (Baker's yeast)).